A 692-amino-acid chain; its full sequence is DNA ligase (692 aa).

NAD(+) contacts are provided by residues 40–44 (DAAYD), 89–90 (SL), and Glu-121. Catalysis depends on Lys-123, which acts as the N6-AMP-lysine intermediate. NAD(+) is bound by residues Arg-144, Glu-181, Lys-297, and Lys-321. 4 residues coordinate Zn(2+): Cys-415, Cys-417, Cys-439, and Cys-445. The region spanning 614–692 (KTDTAVAGKT…EDEWLEMVGS (79 aa)) is the BRCT domain.

Belongs to the NAD-dependent DNA ligase family. LigA subfamily. Mg(2+) serves as cofactor. It depends on Mn(2+) as a cofactor.

The catalysed reaction is NAD(+) + (deoxyribonucleotide)n-3'-hydroxyl + 5'-phospho-(deoxyribonucleotide)m = (deoxyribonucleotide)n+m + AMP + beta-nicotinamide D-nucleotide.. Its function is as follows. DNA ligase that catalyzes the formation of phosphodiester linkages between 5'-phosphoryl and 3'-hydroxyl groups in double-stranded DNA using NAD as a coenzyme and as the energy source for the reaction. It is essential for DNA replication and repair of damaged DNA. The polypeptide is DNA ligase (Phenylobacterium zucineum (strain HLK1)).